Reading from the N-terminus, the 483-residue chain is Protein nucleotidyltransferase YdiU (483 aa).

The ATP site is built by G87, G89, R90, K110, D122, G123, R173, and R180. D249 (proton acceptor) is an active-site residue. 2 residues coordinate Mg(2+): N250 and D259. Residue D259 participates in ATP binding.

The protein belongs to the SELO family. Mg(2+) is required as a cofactor. Mn(2+) serves as cofactor.

The enzyme catalyses L-seryl-[protein] + ATP = 3-O-(5'-adenylyl)-L-seryl-[protein] + diphosphate. The catalysed reaction is L-threonyl-[protein] + ATP = 3-O-(5'-adenylyl)-L-threonyl-[protein] + diphosphate. It carries out the reaction L-tyrosyl-[protein] + ATP = O-(5'-adenylyl)-L-tyrosyl-[protein] + diphosphate. It catalyses the reaction L-histidyl-[protein] + UTP = N(tele)-(5'-uridylyl)-L-histidyl-[protein] + diphosphate. The enzyme catalyses L-seryl-[protein] + UTP = O-(5'-uridylyl)-L-seryl-[protein] + diphosphate. The catalysed reaction is L-tyrosyl-[protein] + UTP = O-(5'-uridylyl)-L-tyrosyl-[protein] + diphosphate. Functionally, nucleotidyltransferase involved in the post-translational modification of proteins. It can catalyze the addition of adenosine monophosphate (AMP) or uridine monophosphate (UMP) to a protein, resulting in modifications known as AMPylation and UMPylation. The chain is Protein nucleotidyltransferase YdiU from Yersinia pseudotuberculosis serotype O:1b (strain IP 31758).